The primary structure comprises 709 residues: Eukaryotic translation initiation factor 3 subunit B (709 aa).

The sufficient for interaction with HCR1 and TIF32 stretch occupies residues 1-98; sequence MSINEEEYLR…LFIQYKNVAD (98 aa). Residues 1-221 form a sufficient for interaction with PIC8 region; the sequence is MSINEEEYLR…GIQAWGGADF (221 aa). Positions 37 to 124 constitute an RRM domain; it reads NYVIVDGAPI…HRLLVNRLSD (88 aa).

The protein belongs to the eIF-3 subunit B family. As to quaternary structure, component of the eukaryotic translation initiation factor 3 (eIF-3) complex.

It is found in the cytoplasm. In terms of biological role, RNA-binding component of the eukaryotic translation initiation factor 3 (eIF-3) complex, which is involved in protein synthesis of a specialized repertoire of mRNAs and, together with other initiation factors, stimulates binding of mRNA and methionyl-tRNAi to the 40S ribosome. The eIF-3 complex specifically targets and initiates translation of a subset of mRNAs involved in cell proliferation. This Lodderomyces elongisporus (strain ATCC 11503 / CBS 2605 / JCM 1781 / NBRC 1676 / NRRL YB-4239) (Yeast) protein is Eukaryotic translation initiation factor 3 subunit B.